A 673-amino-acid chain; its full sequence is Zinc finger and BTB domain-containing protein 16 (673 aa).

The 63-residue stretch at 34–96 (CDVVIMVDSQ…AYTATLQAKA (63 aa)) folds into the BTB domain. 3 positions are modified to phosphoserine; by PDPK1: serine 76, serine 184, and serine 197. Residues 200 to 300 (KAAVDSLMTI…SARELHYGRE (101 aa)) form an interaction with RUNX1T1 region. 2 disordered regions span residues 215-236 (QGTLQPPAGPEEPTLAGGGRHP) and 249-332 (DEVP…KHLG). Serine 256 is modified (phosphoserine; by PDPK1). The residue at position 282 (threonine 282) is a Phosphothreonine; by PDPK1. Basic and acidic residues-rich tracts occupy residues 293-302 (RELHYGREES) and 319-331 (RPEHPAPPPEKHL). 8 C2H2-type zinc fingers span residues 404 to 426 (EQCSVCGVELPDNEAVEQHRKLH), 432 to 454 (YGCELCGKRFLDSLRLRMHLLAH), 461 to 483 (FVCDQCGAQFSKEDALETHRQTH), 490 to 512 (VFCLLCGKRFQAQSALQQHMEVH), 518 to 540 (YICSECNRTFPSHTALKRHLRSH), 546 to 568 (YECEFCGSCFRDESTLKSHKRIH), 574 to 596 (YECNGCGKKFSLKHQLETHYRVH), and 602 to 624 (FECKLCHQRSRDYSAMIKHLRTH). Serine 628 carries the post-translational modification Phosphoserine; by PDPK1. The segment at 630–652 (YQCTICTEYCPSLSSMQKHMKGH) adopts a C2H2-type 9 zinc-finger fold.

Belongs to the krueppel C2H2-type zinc-finger protein family. As to quaternary structure, binds EPN1. Interacts with ZBTB32 and CUL3. Interacts with ATP7B. Interacts with transcriptional corepressor RUNX1T1 (via its N-terminus); the interaction increases the transcription repression activity of ZBTB16. Interacts (via C2H2-type zinc finger domains 1 and 2) with RNF112. Within the hematopoietic system, PLZF is expressed in bone marrow, early myeloid cell lines and peripheral blood mononuclear cells. Also expressed in the ovary, and at lower levels, in the kidney and lung.

Its subcellular location is the nucleus. The protein localises to the nuclear body. It participates in protein modification; protein ubiquitination. Its function is as follows. Acts as a transcriptional repressor. Transcriptional repression may be mediated through recruitment of histone deacetylases to target promoters. May play a role in myeloid maturation and in the development and/or maintenance of other differentiated tissues. Probable substrate-recognition component of an E3 ubiquitin-protein ligase complex which mediates the ubiquitination and subsequent proteasomal degradation of target proteins. The chain is Zinc finger and BTB domain-containing protein 16 (ZBTB16) from Homo sapiens (Human).